We begin with the raw amino-acid sequence, 341 residues long: MIQFKNISKHYQLKGQTIHALDQINLDIPAGSIFGIIGYSGAGKSTLIRLINLLERPTHGQIIINQKDFTALNAQSLRQERANIGMIFQHFNLLQTKTVAANIEMPLKLLGYSKIEREKRLMELLDFIDLTHKKDAFPDELSGGQKQRVGIARALANHPKILLCDEATSALDPQTTKSVLALLKKINKEQGITIVMVTHEMDVIESICDHVAVMESGHVIETGPTVEIFSNPQHPTTKTFIQTVLQQHLPVNILSKLEHQHHHSIYRLQFLGKSAQEPVIQSMIKQFDISLNILFANMTEIDGTVIGQMFVQLLGDDTLIQQAIEFLERHGVSVNQSGEQV.

An ABC transporter domain is found at 2-241; the sequence is IQFKNISKHY…PQHPTTKTFI (240 aa). An ATP-binding site is contributed by 38–45; the sequence is GYSGAGKS.

The protein belongs to the ABC transporter superfamily. Methionine importer (TC 3.A.1.24) family. The complex is composed of two ATP-binding proteins (MetN), two transmembrane proteins (MetI) and a solute-binding protein (MetQ).

Its subcellular location is the cell inner membrane. It carries out the reaction L-methionine(out) + ATP + H2O = L-methionine(in) + ADP + phosphate + H(+). It catalyses the reaction D-methionine(out) + ATP + H2O = D-methionine(in) + ADP + phosphate + H(+). Functionally, part of the ABC transporter complex MetNIQ involved in methionine import. Responsible for energy coupling to the transport system. The chain is Methionine import ATP-binding protein MetN 2 from Acinetobacter baylyi (strain ATCC 33305 / BD413 / ADP1).